The chain runs to 247 residues: 3(1)-hydroxy-L-isoleucine 4-dioxygenase (247 aa).

Fe cation is bound by residues His-160, Asp-162, and His-213.

This sequence belongs to the iron/ascorbate-dependent oxidoreductase family. It depends on L-ascorbate as a cofactor. Requires Fe(2+) as cofactor.

The catalysed reaction is 3(1)-hydroxy-L-isoleucine + 2-oxoglutarate + O2 = (4S)-3(1),4-dihydroxy-L-isoleucine + succinate + CO2. Functionally, catalyzes the hydroxylation of L-4'-hydroxyisoleucine (4'-HIL) at the C-4 position to form L-4,4'-dihydroxyisoleucine (4,4'-DIHIL). Together with HilA, catalyzes the two step conversion of L-isoleucine into L-4,4'-dihydroxyisoleucine. In vitro, in the absence of HilA, can also catalyze the oxidation of L-methionine and the C-4-hydroxylation of L-leucine and L-isoleucine. In Pantoea ananatis (strain AJ13355), this protein is 3(1)-hydroxy-L-isoleucine 4-dioxygenase.